Consider the following 171-residue polypeptide: Peptidyl-prolyl cis-trans isomerase slr1251 (171 aa).

The PPIase cyclophilin-type domain occupies 6 to 169; the sequence is FFDITIGSDT…QAIVISDCGE (164 aa).

It belongs to the cyclophilin-type PPIase family.

It catalyses the reaction [protein]-peptidylproline (omega=180) = [protein]-peptidylproline (omega=0). PPIases accelerate the folding of proteins. It catalyzes the cis-trans isomerization of proline imidic peptide bonds in oligopeptides. This is Peptidyl-prolyl cis-trans isomerase slr1251 from Synechocystis sp. (strain ATCC 27184 / PCC 6803 / Kazusa).